The primary structure comprises 269 residues: Aminodeoxychorismate lyase (269 aa).

Lys140 bears the N6-(pyridoxal phosphate)lysine mark.

Belongs to the class-IV pyridoxal-phosphate-dependent aminotransferase family. As to quaternary structure, homodimer. Pyridoxal 5'-phosphate is required as a cofactor.

It catalyses the reaction 4-amino-4-deoxychorismate = 4-aminobenzoate + pyruvate + H(+). It functions in the pathway cofactor biosynthesis; tetrahydrofolate biosynthesis; 4-aminobenzoate from chorismate: step 2/2. In terms of biological role, involved in the biosynthesis of p-aminobenzoate (PABA), a precursor of tetrahydrofolate. Converts 4-amino-4-deoxychorismate into 4-aminobenzoate (PABA) and pyruvate. The protein is Aminodeoxychorismate lyase (pabC) of Escherichia coli (strain K12).